The sequence spans 136 residues: ATP synthase F(0) complex subunit C1, mitochondrial (136 aa).

The N-terminal 61 residues, 1 to 61, are a transit peptide targeting the mitochondrion; that stretch reads MQTAGALFIS…REFQTSVVSR (61 aa). A helical transmembrane segment spans residues 77 to 97; it reads VGVAGSGAGIGTVFGSLIIGY. N6,N6,N6-trimethyllysine is present on Lys-104. The helical transmembrane segment at 112–132 threads the bilayer; it reads ILGFALSEAMGLFCLMVAFLI.

It belongs to the ATPase C chain family. In terms of assembly, homooctamer; the c-ring consists of eight c subunits forming a circle, and each subunit adopts a hairpin shape. Component of the ATP synthase complex composed at least of ATP5F1A/subunit alpha, ATP5F1B/subunit beta, ATP5MC1/subunit c (homooctomer), MT-ATP6/subunit a, MT-ATP8/subunit 8, ATP5ME/subunit e, ATP5MF/subunit f, ATP5MG/subunit g, ATP5MK/subunit k, ATP5MJ/subunit j, ATP5F1C/subunit gamma, ATP5F1D/subunit delta, ATP5F1E/subunit epsilon, ATP5PF/subunit F6, ATP5PB/subunit b, ATP5PD/subunit d, ATP5PO/subunit OSCP. ATP synthase complex consists of a soluble F(1) head domain (subunits alpha(3) and beta(3)) - the catalytic core - and a membrane F(0) domain - the membrane proton channel (subunits c, a, 8, e, f, g, k and j). These two domains are linked by a central stalk (subunits gamma, delta, and epsilon) rotating inside the F1 region and a stationary peripheral stalk (subunits F6, b, d, and OSCP). Interacts with TMEM70 (homooligomer form); this interaction facilitates the oligomer formation of subunit c/ATP5MC1 (c-ring) and the c-ring membrane insertion and also protects ATP5MC1 against intramitochondrial proteolysis. In terms of processing, trimethylated by ATPSCKMT at Lys-104. Methylation is required for proper incorporation of the C subunit into the ATP synthase complex and mitochondrial respiration.

It localises to the mitochondrion membrane. It catalyses the reaction H(+)(in) = H(+)(out). Functionally, subunit c, of the mitochondrial membrane ATP synthase complex (F(1)F(0) ATP synthase or Complex V) that produces ATP from ADP in the presence of a proton gradient across the membrane which is generated by electron transport complexes of the respiratory chain. ATP synthase complex consist of a soluble F(1) head domain - the catalytic core - and a membrane F(1) domain - the membrane proton channel. These two domains are linked by a central stalk rotating inside the F(1) region and a stationary peripheral stalk. During catalysis, ATP synthesis in the catalytic domain of F(1) is coupled via a rotary mechanism of the central stalk subunits to proton translocation. With the subunit a (MT-ATP6), forms the proton-conducting channel in the F(0) domain, that contains two crucial half-channels (inlet and outlet) that facilitate proton movement from the mitochondrial intermembrane space (IMS) into the matrix. Protons are taken up via the inlet half-channel and released through the outlet half-channel, following a Grotthuss mechanism. This is ATP synthase F(0) complex subunit C1, mitochondrial from Homo sapiens (Human).